A 364-amino-acid chain; its full sequence is MARTMRSRVVAGAVACAMSIAPFAGTTAVMTLATTHAAMAATAPAAGYAATRYPIILVHGLSGTDKYAGVLEYWYGIQEDLQQNGATVYVANLSGFQSDDGPNGRGEQLLAYVKTVLAATGATKVNLVGHSQGGLSSRYVAAVAPDLVASVTTIGTPHRGSEFADFVQDVLAYDPTGLSSSVIAAFVNVFGILTSSSHNTNQDALAALQTLTTARAATYNQNYPSAGLGAPGSCQTGAPTETVGGNTHLLYSWAGTAIQPTLSVFGVTGATDTSTLPLVDPANVLDLSTLALFGTGTVMINRGSGQNDGLVSKCSALYGKVLSTSYKWNHLDEINQLLGVRGAYAEDPVAVIRTHANRLKLAGV.

Residues 1-44 (MARTMRSRVVAGAVACAMSIAPFAGTTAVMTLATTHAAMAATAP) form the signal peptide. Residues 54–266 (PIILVHGLSG…AIQPTLSVFG (213 aa)) enclose the AB hydrolase-1 domain. Leu-61 contributes to the substrate binding site. The active-site Nucleophile is Ser-131. Gln-132 is a binding site for substrate. A disulfide bond links Cys-234 and Cys-314. Asp-286 serves as a coordination point for Ca(2+). Active-site charge relay system residues include Asp-308 and His-330. Ca(2+)-binding residues include Asp-332, Gln-336, and Val-340.

The protein belongs to the AB hydrolase superfamily. Pseudomonas lipase family. In terms of assembly, monomer. It depends on Ca(2+) as a cofactor.

It localises to the secreted. The catalysed reaction is a triacylglycerol + H2O = a diacylglycerol + a fatty acid + H(+). With respect to regulation, inhibited by RC-(Rp,Sp)- and SC-(Rp,Sp)-1,2-dioctylcarbamoylglycero-3-O-p-nitrophenyl octylphosphonate. Also inhibited by diethyl-p-nitrophenylphosphate (E600). Functionally, catalyzes the hydrolysis of triacylglycerol. It shows a preference for triacylglycerols with a chain length between 6 and 12 carbons. In Burkholderia cepacia (Pseudomonas cepacia), this protein is Triacylglycerol lipase.